The primary structure comprises 474 residues: Methylenetetrahydrofolate--tRNA-(uracil-5-)-methyltransferase TrmFO (474 aa).

FAD is bound at residue 13-18 (GGGLAG).

This sequence belongs to the MnmG family. TrmFO subfamily. It depends on FAD as a cofactor.

It is found in the cytoplasm. It carries out the reaction uridine(54) in tRNA + (6R)-5,10-methylene-5,6,7,8-tetrahydrofolate + NADH + H(+) = 5-methyluridine(54) in tRNA + (6S)-5,6,7,8-tetrahydrofolate + NAD(+). It catalyses the reaction uridine(54) in tRNA + (6R)-5,10-methylene-5,6,7,8-tetrahydrofolate + NADPH + H(+) = 5-methyluridine(54) in tRNA + (6S)-5,6,7,8-tetrahydrofolate + NADP(+). Catalyzes the folate-dependent formation of 5-methyl-uridine at position 54 (M-5-U54) in all tRNAs. This Bartonella tribocorum (strain CIP 105476 / IBS 506) protein is Methylenetetrahydrofolate--tRNA-(uracil-5-)-methyltransferase TrmFO.